Here is a 1049-residue protein sequence, read N- to C-terminus: Toll-like receptor 7 (1049 aa).

Residues 1–26 form the signal peptide; it reads MVFPMWTLKRQILILFNIILISKLLG. Residues 27–839 are Extracellular-facing; that stretch reads ARWFPKTLPC…LYTCELDLTN (813 aa). 6 LRR repeats span residues 43 to 64, 65 to 87, 110 to 126, 127 to 149, 151 to 170, and 171 to 195; these read PKNH…GGIP, TNTT…SFHR, NMCI…FSGL, TYLK…LPPS, QLLS…NLTE, and LANI…SYSI. Residues Asn66 and Asn69 are each glycosylated (N-linked (GlcNAc...) asparagine). Asn167 carries an N-linked (GlcNAc...) asparagine glycan. 2 N-linked (GlcNAc...) asparagine glycosylation sites follow: Asn202 and Asn215. LRR repeat units lie at residues 203–226, 228–247, 248–275, 289–312, 314–337, 339–368, 369–392, 396–419, and 421–443; these read LTKL…LPST, TELY…DFNN, LNQL…PCKN, LTEL…WFKN, NKLQ…KFLH, LPSL…AFSS, LKSL…NLSP, LQNL…MFKQ, and KRLK…SEVG. A glycan (N-linked (GlcNAc...) asparagine) is linked at Asn361. N-linked (GlcNAc...) asparagine glycosylation occurs at Asn413. An N-linked (GlcNAc...) asparagine glycan is attached at Asn488. LRR repeat units lie at residues 492–515, 516–540, 541–564, and 566–588; these read YKYG…DFQH, LSFL…EFQP, LAEL…AFEE, and HKLE…ITHM. Asn523 and Asn534 each carry an N-linked (GlcNAc...) asparagine glycan. N-linked (GlcNAc...) asparagine glycosylation is present at Asn590. LRR repeat units lie at residues 595–618, 619–644, 649–672, 674–697, 698–721, 723–745, 746–769, and 772–795; these read LKVL…TMES, ESLR…RYLQ, LLKL…VFDG, PPNL…KLQC, LKNL…LSNC, RSLK…FLQD, AFQL…SFPE, and LNNL…VWFV. Residues Asn679 and Asn720 are each glycosylated (N-linked (GlcNAc...) asparagine). An N-linked (GlcNAc...) asparagine glycan is attached at Asn799. A helical transmembrane segment spans residues 840-860; the sequence is LILFSLSISVSLFLMVMMTAS. At 861–1049 the chain is on the cytoplasmic side; that stretch reads HLYFWDVWYI…AYSQVFKETV (189 aa). The region spanning 889–1033 is the TIR domain; it reads CCYDAFIVYD…YFWQCLKNAL (145 aa).

Belongs to the Toll-like receptor family. Homodimer. Interacts with MYD88 via their respective TIR domains. Interacts with UNC93B1. Interacts with SMPDL3B. In terms of tissue distribution, detected in brain, placenta, spleen, stomach, small intestine, lung and in plasmacytoid pre-dendritic cells. Expressed in peripheral mononuclear blood cells.

It localises to the endoplasmic reticulum membrane. It is found in the endosome. Its subcellular location is the lysosome. The protein resides in the cytoplasmic vesicle. The protein localises to the phagosome. Activated by guanosine analogs including deoxyguanosine, 7-thia-8-oxoguanosine or 7-deazaguanosine in a RNA-independent manner. Activated by imiquimod. In terms of biological role, endosomal receptor that plays a key role in innate and adaptive immunity. Controls host immune response against pathogens through recognition of uridine-containing single strand RNAs (ssRNAs) of viral origin or guanosine analogs. Upon binding to agonists, undergoes dimerization that brings TIR domains from the two molecules into direct contact, leading to the recruitment of TIR-containing downstream adapter MYD88 through homotypic interaction. In turn, the Myddosome signaling complex is formed involving IRAK4, IRAK1, TRAF6, TRAF3 leading to activation of downstream transcription factors NF-kappa-B and IRF7 to induce pro-inflammatory cytokines and interferons, respectively. In plasmacytoid dendritic cells, RNASET2 endonuclease cooperates with PLD3 or PLD4 5'-&gt;3' exonucleases to process RNA and release 2',3'-cyclic guanosine monophosphate (2',3'-cGMP) and cytidine-rich RNA fragments that occupy TLR7 ligand-binding pockets and trigger a signaling-competent state. The protein is Toll-like receptor 7 of Homo sapiens (Human).